Consider the following 114-residue polypeptide: SCYYVCVFCFGRYTVPFSGPSVPWRDEKRACFTRWLMPSVVDISHFLKKQHKKKMMWFVVLTVSFSYYRYYRSRERTARENTVFSGTSCRRPSPGRRDVRRERWRTTNTDRWCS.

This is an uncharacterized protein from Human cytomegalovirus (strain AD169) (HHV-5).